Consider the following 177-residue polypeptide: Peptide methionine sulfoxide reductase MsrA 2 (177 aa).

The active site involves Cys-12.

Belongs to the MsrA Met sulfoxide reductase family.

The enzyme catalyses L-methionyl-[protein] + [thioredoxin]-disulfide + H2O = L-methionyl-(S)-S-oxide-[protein] + [thioredoxin]-dithiol. The catalysed reaction is [thioredoxin]-disulfide + L-methionine + H2O = L-methionine (S)-S-oxide + [thioredoxin]-dithiol. Its function is as follows. Has an important function as a repair enzyme for proteins that have been inactivated by oxidation. Catalyzes the reversible oxidation-reduction of methionine sulfoxide in proteins to methionine. The protein is Peptide methionine sulfoxide reductase MsrA 2 (msrA2) of Staphylococcus aureus (strain Mu50 / ATCC 700699).